A 61-amino-acid chain; its full sequence is Small ribosomal subunit protein uS14 (61 aa).

Residues C24, C27, C40, and C43 each coordinate Zn(2+).

Belongs to the universal ribosomal protein uS14 family. Zinc-binding uS14 subfamily. Part of the 30S ribosomal subunit. Contacts proteins S3 and S10. Zn(2+) serves as cofactor.

Binds 16S rRNA, required for the assembly of 30S particles and may also be responsible for determining the conformation of the 16S rRNA at the A site. The chain is Small ribosomal subunit protein uS14 from Carboxydothermus hydrogenoformans (strain ATCC BAA-161 / DSM 6008 / Z-2901).